A 207-amino-acid polypeptide reads, in one-letter code: MKFDLTAACTLSATLLVSSGTVFATTANTANKSLTTIESHTPISYGNNSSSLWEKFNNNVALTWDAPNNELYLPVITWHNRHTYDKEKTDRYNERPWGFGYGKYRYDEDNDWHSLYAMAFMDSHNRLEPIVGYGFQKMWIPGDLEGFRMGIGFTLSVTARHDYYYVPIPLPLPLFSIEYDRLSFQGTYIPGTYNNGNVLFAWLRWQW.

The signal sequence occupies residues 1 to 24 (MKFDLTAACTLSATLLVSSGTVFA). Catalysis depends on residues histidine 79, aspartate 122, and serine 123.

It belongs to the lipid A palmitoyltransferase family. Homodimer.

Its subcellular location is the cell outer membrane. It carries out the reaction a lipid A + a 1,2-diacyl-sn-glycero-3-phosphocholine = a hepta-acyl lipid A + a 2-acyl-sn-glycero-3-phosphocholine. The catalysed reaction is a lipid IVA + a 1,2-diacyl-sn-glycero-3-phosphocholine = a lipid IVB + a 2-acyl-sn-glycero-3-phosphocholine. It catalyses the reaction a lipid IIA + a 1,2-diacyl-sn-glycero-3-phosphocholine = a lipid IIB + a 2-acyl-sn-glycero-3-phosphocholine. Its function is as follows. Transfers a fatty acid residue from the sn-1 position of a phospholipid to the N-linked hydroxyfatty acid chain on the proximal unit of lipid A or its precursors. The sequence is that of Lipid A acyltransferase PagP from Photorhabdus laumondii subsp. laumondii (strain DSM 15139 / CIP 105565 / TT01) (Photorhabdus luminescens subsp. laumondii).